The following is a 385-amino-acid chain: MNPVPAQREYFLDSIRAWLMLLGIPFHISLIYSSHTWHVNSAEPSLWLTLFNDFIHSFRMQVFFVISGYFSYMLFLRYPLKKWWKVRVKRVGIPMLTAIPLLTLPQFIMLQYVKGKAESWPGLSLYDKYNTLAWELISHLWFLLVLVVMTTLCVWIFKRIRNNLENSDKTNKKFSMVKLSVIFLCLGIGYAVIRRTIFIVYPPILSNGMFNFIVMQTLFYLPFFILGALAFIFPHLKALFTTPSRGCTLAAALAFVAYLLNQRYGSGDAWMYETESVITMVLGLWMVNVVFSFGHRLLNFQSARVTYFVNASLFIYLVHHPLTLFFGAYITPHITSNWLGFLCGLIFVVGIAIILYEIHLRIPLLKFLFSGKPVVKRENDKAPAR.

10 consecutive transmembrane segments (helical) span residues 17–37 (AWLMLLGIPFHISLIYSSHTW), 60–80 (MQVFFVISGYFSYMLFLRYPL), 91–111 (VGIPMLTAIPLLTLPQFIMLQ), 137–157 (ISHLWFLLVLVVMTTLCVWIF), 173–193 (KFSMVKLSVIFLCLGIGYAVI), 212–232 (FIVMQTLFYLPFFILGALAFI), 239–259 (LFTTPSRGCTLAAALAFVAYL), 274–294 (TESVITMVLGLWMVNVVFSFG), 311–331 (ASLFIYLVHHPLTLFFGAYIT), and 338–358 (WLGFLCGLIFVVGIAIILYEI).

The protein belongs to the acyltransferase 3 family. OpgC subfamily.

The protein localises to the cell membrane. The protein operates within glycan metabolism; osmoregulated periplasmic glucan (OPG) biosynthesis. Functionally, necessary for the succinyl substitution of periplasmic glucans. Could catalyze the transfer of succinyl residues from the cytoplasmic side of the membrane to the nascent glucan backbones on the periplasmic side of the membrane. The sequence is that of Glucans biosynthesis protein C from Escherichia coli (strain SMS-3-5 / SECEC).